The sequence spans 553 residues: ATP synthase F(1) complex subunit alpha, mitochondrial (553 aa).

Residues 1 to 43 (MLSVRVAAAVVRALPRRAGLVSRNALGSSFIAARNFHASNTHL) constitute a mitochondrion transit peptide. Phosphoserine occurs at positions 53 and 65. A Phosphoserine; alternate modification is found at Ser76. O-linked (GlcNAc) serine; alternate glycosylation occurs at Ser76. Ser106 is modified (phosphoserine). Lys123, Lys126, and Lys132 each carry N6-acetyllysine. At Thr134 the chain carries Phosphothreonine. Lys161 is subject to N6-acetyllysine; alternate. An N6-succinyllysine; alternate modification is found at Lys161. Ser166 carries the post-translational modification Phosphoserine. N6-acetyllysine; alternate is present on Lys167. Lys167 is subject to N6-succinyllysine; alternate. The residue at position 184 (Ser184) is a Phosphoserine. The residue at position 204 (Arg204) is an Omega-N-methylarginine. The ATP site is built by Gln215, Gly217, Lys218, Thr219, and Ser220. Residue Thr219 coordinates Mg(2+). 2 positions are modified to N6-acetyllysine; alternate: Lys230 and Lys239. N6-succinyllysine; alternate occurs at positions 230 and 239. Lys240 is modified (N6-acetyllysine). N6-acetyllysine; alternate occurs at positions 261 and 305. N6-succinyllysine; alternate occurs at positions 261 and 305. Asp312 contacts Mg(2+). At Lys427 the chain carries N6-acetyllysine; alternate. At Lys427 the chain carries N6-succinyllysine; alternate. N6-acetyllysine is present on Lys434. Residues Gln473 and Gln475 each contribute to the ATP site. An N6-acetyllysine; alternate mark is found at Lys498, Lys506, Lys531, and Lys539. Lys498, Lys506, Lys531, and Lys539 each carry N6-succinyllysine; alternate. Residue Lys541 is modified to N6-acetyllysine.

It belongs to the ATPase alpha/beta chains family. In terms of assembly, homotrimer. Component of the ATP synthase complex composed at least of ATP5F1A/subunit alpha, ATP5F1B/subunit beta, ATP5MC1/subunit c (homooctomer), MT-ATP6/subunit a, MT-ATP8/subunit 8, ATP5ME/subunit e, ATP5MF/subunit f, ATP5MG/subunit g, ATP5MK/subunit k, ATP5MJ/subunit j, ATP5F1C/subunit gamma, ATP5F1D/subunit delta, ATP5F1E/subunit epsilon, ATP5PF/subunit F6, ATP5PB/subunit b, ATP5PD/subunit d, ATP5PO/subunit OSCP. ATP synthase complex consists of a soluble F(1) head domain (subunits alpha(3) and beta(3)) - the catalytic core - and a membrane F(0) domain - the membrane proton channel (subunits c, a, 8, e, f, g, k and j). These two domains are linked by a central stalk (subunits gamma, delta, and epsilon) rotating inside the F1 region and a stationary peripheral stalk (subunits F6, b, d, and OSCP). Interacts with ATPAF2. Interacts with HRG; the interaction occurs on the surface of T-cells and alters the cell morphology when associated with concanavalin (in vitro). Interacts with PLG (angiostatin peptide); the interaction inhibits most of the angiogenic properties of angiostatin. Interacts with BLOC1S1. Interacts with BCL2L1 isoform BCL-X(L); the interaction mediates the association of BCL2L1 isoform BCL-X(L) with the mitochondrial membrane F(1)F(0) ATP synthase and enhances neurons metabolic efficiency. Interacts with CLN5 and PPT1. Interacts with S100A1; this interaction increases F1-ATPase activity. Interacts with ABCB7; this interaction allows the regulation of cellular iron homeostasis and cellular reactive oxygen species (ROS) levels in cardiomyocytes. In terms of processing, acetylated on lysine residues. BLOC1S1 is required for acetylation.

It localises to the mitochondrion inner membrane. The protein resides in the cell membrane. In terms of biological role, subunit alpha, of the mitochondrial membrane ATP synthase complex (F(1)F(0) ATP synthase or Complex V) that produces ATP from ADP in the presence of a proton gradient across the membrane which is generated by electron transport complexes of the respiratory chain. ATP synthase complex consist of a soluble F(1) head domain - the catalytic core - and a membrane F(1) domain - the membrane proton channel. These two domains are linked by a central stalk rotating inside the F(1) region and a stationary peripheral stalk. During catalysis, ATP synthesis in the catalytic domain of F(1) is coupled via a rotary mechanism of the central stalk subunits to proton translocation. In vivo, can only synthesize ATP although its ATP hydrolase activity can be activated artificially in vitro. With the catalytic subunit beta (ATP5F1B), forms the catalytic core in the F(1) domain. Subunit alpha does not bear the catalytic high-affinity ATP-binding sites. This Pongo abelii (Sumatran orangutan) protein is ATP synthase F(1) complex subunit alpha, mitochondrial.